Consider the following 370-residue polypeptide: MTQKTLLNDTHRALGAKMVDFGGWDMPIHYGSQLDEHHLVRRESGVFDVSHMTVVDLRGDQVKPFLRRLLANSVDKLKVTGKALYSCMLNPRGGVIDDLIVYYLGDDFFRMVVNASTREKDLAWLREQAAPFGVTVEQRPDLAILAVQGPQARDIVIGLAREADRAALTKLGRFAALQAQSDDGIELFVARTGYTGEDGFEILLPQDAVVAFWNRLLAAGVKPAGLGARDTLRLEAGMNLYGQDMDEAISPYEAALAWTVSLDEGRDFIGRDVLEAQKAAGNARQMIGLVMDEKGVLRHGQAVTTAGGQGEILSGTFSPTLAKGIAFARVPAGELGQVTVDIRGRQVPVRVVKFPFVREGQAQPGVLGDA.

The protein belongs to the GcvT family. In terms of assembly, the glycine cleavage system is composed of four proteins: P, T, L and H.

It carries out the reaction N(6)-[(R)-S(8)-aminomethyldihydrolipoyl]-L-lysyl-[protein] + (6S)-5,6,7,8-tetrahydrofolate = N(6)-[(R)-dihydrolipoyl]-L-lysyl-[protein] + (6R)-5,10-methylene-5,6,7,8-tetrahydrofolate + NH4(+). Its function is as follows. The glycine cleavage system catalyzes the degradation of glycine. The sequence is that of Aminomethyltransferase from Stenotrophomonas maltophilia (strain R551-3).